The chain runs to 86 residues: Sec-independent protein translocase protein TatA (86 aa).

A helical membrane pass occupies residues 1-21 (MGGISIWQLLIIAVIVVLLFG). The segment at 42 to 86 (AIGDDNQPQQAQKTSSDADFETKNITEKQSVAQSETSESKNKEQV) is disordered. Polar residues-rich tracts occupy residues 47–58 (NQPQQAQKTSSD) and 68–77 (EKQSVAQSET).

This sequence belongs to the TatA/E family. As to quaternary structure, the Tat system comprises two distinct complexes: a TatABC complex, containing multiple copies of TatA, TatB and TatC subunits, and a separate TatA complex, containing only TatA subunits. Substrates initially bind to the TatABC complex, which probably triggers association of the separate TatA complex to form the active translocon.

It localises to the cell inner membrane. Part of the twin-arginine translocation (Tat) system that transports large folded proteins containing a characteristic twin-arginine motif in their signal peptide across membranes. TatA could form the protein-conducting channel of the Tat system. The chain is Sec-independent protein translocase protein TatA from Photorhabdus laumondii subsp. laumondii (strain DSM 15139 / CIP 105565 / TT01) (Photorhabdus luminescens subsp. laumondii).